The chain runs to 334 residues: Methionyl-tRNA formyltransferase (334 aa).

(6S)-5,6,7,8-tetrahydrofolate is bound at residue S111–P114.

It belongs to the Fmt family.

It carries out the reaction L-methionyl-tRNA(fMet) + (6R)-10-formyltetrahydrofolate = N-formyl-L-methionyl-tRNA(fMet) + (6S)-5,6,7,8-tetrahydrofolate + H(+). Attaches a formyl group to the free amino group of methionyl-tRNA(fMet). The formyl group appears to play a dual role in the initiator identity of N-formylmethionyl-tRNA by promoting its recognition by IF2 and preventing the misappropriation of this tRNA by the elongation apparatus. The sequence is that of Methionyl-tRNA formyltransferase from Trichormus variabilis (strain ATCC 29413 / PCC 7937) (Anabaena variabilis).